The sequence spans 1216 residues: RAB11-binding protein RELCH (1216 aa).

Disordered stretches follow at residues 1–73 (MAAM…GLPG) and 135–177 (GNFE…QLNR). An N-acetylalanine modification is found at A2. S20 and S22 each carry phosphoserine. The segment covering 21 to 31 (DSDEDDDEVAA) has biased composition (acidic residues). Residue T32 is modified to Phosphothreonine. S54 and S56 each carry phosphoserine. The span at 148–163 (GAPGVPGAAGVGGAGG) shows a compositional bias: gly residues. Phosphoserine is present on residues S180 and S182. Residue T183 is modified to Phosphothreonine. At S186 the chain carries Phosphoserine. A coiled-coil region spans residues 197-231 (NRETDEKVAVLEFELRKAKETIQALRANLTKAAEH). The LisH domain maps to 255 to 287 (EKRALNFLVNEFLLKNNYKLTSITFSDENDDQD). The stretch at 359–397 (VQKLEDKISLLNSEKWSLMEQIRRLKSEMDFLKNEHFAI) forms a coiled coil. S385 is subject to Phosphoserine. The segment at 401–477 (CDSVQPPLDQ…SSLSSKKTVH (77 aa)) is disordered. Basic and acidic residues predominate over residues 411 to 435 (LPHKDSEDSGQHPDVNSSDKGKNTD). Residue S453 is modified to Phosphoserine. Residues 497–779 (CRMSADSRLG…SSKAKLHGEV (283 aa)) are interaction with RAB11A and RAB11B. HEAT repeat units lie at residues 601–639 (LLPQ…RSSL) and 640–679 (VLSM…KYHQ). Residue S792 is modified to Phosphoserine. The stretch at 1004–1042 (VAPALVTLSSDPEFSVRIATIPAFGTIMETVIQRELLER) is one HEAT 3 repeat. Residue S1149 is modified to Phosphoserine.

It is found in the recycling endosome. Its subcellular location is the golgi apparatus. It localises to the trans-Golgi network. In terms of biological role, regulates intracellular cholesterol distribution from recycling endosomes to the trans-Golgi network through interactions with RAB11 and OSBP. Functions in membrane tethering and promotes OSBP-mediated cholesterol transfer between RAB11-bound recycling endosomes and OSBP-bound Golgi-like membranes. The chain is RAB11-binding protein RELCH from Homo sapiens (Human).